The sequence spans 427 residues: 3-phosphoshikimate 1-carboxyvinyltransferase (427 aa).

Positions 27, 28, and 32 each coordinate 3-phosphoshikimate. K27 serves as a coordination point for phosphoenolpyruvate. The phosphoenolpyruvate site is built by G95 and R123. Positions 166, 167, 168, 192, 305, and 332 each coordinate 3-phosphoshikimate. Q168 contributes to the phosphoenolpyruvate binding site. D305 (proton acceptor) is an active-site residue. R336 and R377 together coordinate phosphoenolpyruvate.

Belongs to the EPSP synthase family. Monomer.

It is found in the cytoplasm. It catalyses the reaction 3-phosphoshikimate + phosphoenolpyruvate = 5-O-(1-carboxyvinyl)-3-phosphoshikimate + phosphate. It participates in metabolic intermediate biosynthesis; chorismate biosynthesis. In terms of biological role, catalyzes the transfer of the enolpyruvyl moiety of phosphoenolpyruvate (PEP) to the 5-hydroxyl of shikimate-3-phosphate (S3P) to produce enolpyruvyl shikimate-3-phosphate and inorganic phosphate. The chain is 3-phosphoshikimate 1-carboxyvinyltransferase from Aeropyrum pernix (strain ATCC 700893 / DSM 11879 / JCM 9820 / NBRC 100138 / K1).